A 598-amino-acid polypeptide reads, in one-letter code: Aspartate--tRNA(Asp/Asn) ligase (598 aa).

Glutamate 177 serves as a coordination point for L-aspartate. The tract at residues 201-204 (QLFK) is aspartate. Position 223 (arginine 223) interacts with L-aspartate. Residues 223-225 (RDE) and glutamine 232 each bind ATP. Histidine 456 is a binding site for L-aspartate. Glutamate 493 provides a ligand contact to ATP. Arginine 500 is an L-aspartate binding site. 545 to 548 (GLDR) contacts ATP.

Belongs to the class-II aminoacyl-tRNA synthetase family. Type 1 subfamily. In terms of assembly, homodimer.

The protein localises to the cytoplasm. The catalysed reaction is tRNA(Asx) + L-aspartate + ATP = L-aspartyl-tRNA(Asx) + AMP + diphosphate. Functionally, aspartyl-tRNA synthetase with relaxed tRNA specificity since it is able to aspartylate not only its cognate tRNA(Asp) but also tRNA(Asn). Reaction proceeds in two steps: L-aspartate is first activated by ATP to form Asp-AMP and then transferred to the acceptor end of tRNA(Asp/Asn). The protein is Aspartate--tRNA(Asp/Asn) ligase of Prochlorococcus marinus (strain AS9601).